The sequence spans 451 residues: Epi-neemfruitin B 7-O-acetyltransferse L7AT (451 aa).

Active-site proton acceptor residues include histidine 165 and aspartate 384.

The protein belongs to the plant acyltransferase family. In terms of assembly, monomer. In terms of tissue distribution, mainly expressed in petioles and, to a lower extent, in roots.

It catalyses the reaction epi-neemfruitin B + acetyl-CoA = 7-acetyl-epi-neemfruitin B + CoA. The protein operates within secondary metabolite biosynthesis; terpenoid biosynthesis. In terms of biological role, acetyltransferase involved in the biosynthesis of limonoids triterpene natural products such as azadirachtin, an antifeedant widely used as bioinsecticide, and possessing many medicinal applications including anti-tumoral, anti-malarial, anti-rheumatic, antibacterial, anti-inflammatory, anti-pyretic and diuretic effects. Catalyzes the formation of 7-acetyl-epi-neemfruitin B from epi-neemfruitin B. The chain is Epi-neemfruitin B 7-O-acetyltransferse L7AT from Melia azedarach (Chinaberry tree).